Reading from the N-terminus, the 98-residue chain is HIG1 domain family member 1B (98 aa).

Residues 1-28 (MSANKGWWVPPEGEDNLSKKFLRKTRES) lie on the Cytoplasmic side of the membrane. The HIG1 domain occupies 1–94 (MSANKGWWVP…YRDYIKRVSE (94 aa)). Residues 29–46 (PLVPIGVAGCLVIAAYRI) traverse the membrane as a helical segment. Residues 47–60 (YRLKARGSTKLSIH) are Extracellular-facing. The helical transmembrane segment at 61 to 83 (LIHTRVAAQACAVGAIMLGAMYT) threads the bilayer. The Cytoplasmic portion of the chain corresponds to 84 to 98 (MYRDYIKRVSEDAEK).

It localises to the membrane. This chain is HIG1 domain family member 1B (Higd1b), found in Mus musculus (Mouse).